We begin with the raw amino-acid sequence, 96 residues long: Co-chaperonin GroES (96 aa).

The protein belongs to the GroES chaperonin family. Heptamer of 7 subunits arranged in a ring. Interacts with the chaperonin GroEL.

The protein localises to the cytoplasm. Functionally, together with the chaperonin GroEL, plays an essential role in assisting protein folding. The GroEL-GroES system forms a nano-cage that allows encapsulation of the non-native substrate proteins and provides a physical environment optimized to promote and accelerate protein folding. GroES binds to the apical surface of the GroEL ring, thereby capping the opening of the GroEL channel. This Methylobacterium radiotolerans (strain ATCC 27329 / DSM 1819 / JCM 2831 / NBRC 15690 / NCIMB 10815 / 0-1) protein is Co-chaperonin GroES.